The sequence spans 490 residues: N-succinylglutamate 5-semialdehyde dehydrogenase (490 aa).

Position 220 to 225 (220 to 225 (GSANTG)) interacts with NAD(+). Catalysis depends on residues Glu243 and Cys277.

The protein belongs to the aldehyde dehydrogenase family. AstD subfamily.

It catalyses the reaction N-succinyl-L-glutamate 5-semialdehyde + NAD(+) + H2O = N-succinyl-L-glutamate + NADH + 2 H(+). It functions in the pathway amino-acid degradation; L-arginine degradation via AST pathway; L-glutamate and succinate from L-arginine: step 4/5. Functionally, catalyzes the NAD-dependent reduction of succinylglutamate semialdehyde into succinylglutamate. This chain is N-succinylglutamate 5-semialdehyde dehydrogenase, found in Shigella dysenteriae serotype 1 (strain Sd197).